A 248-amino-acid polypeptide reads, in one-letter code: MAGHSKWANIKHKKAKEDAKRGKIFTKLIREITVAARLGGGDKDANPRLRAAIATALANNMSKDTIERAVVKGAGGDESANVEEVRYEGYGPGGVAIIVDCMTDNRNRTVGEVRHAFTKSGGNLGTDGSVAYMFTKRGIISFAPGVDEDALMEVALEAGAEDIITHEDGSIDVYTDPHDFSDIQEVLIEKGFNSENAEVTFDAETKAELDTETAEKVMALIDKLEDLDDVQNVYSNANFTQELIEQIG.

This sequence belongs to the TACO1 family.

The protein localises to the cytoplasm. The protein is Probable transcriptional regulatory protein FTF0655 of Francisella tularensis subsp. tularensis (strain FSC 198).